The following is a 119-amino-acid chain: Large ribosomal subunit protein bL20 (119 aa).

This sequence belongs to the bacterial ribosomal protein bL20 family.

In terms of biological role, binds directly to 23S ribosomal RNA and is necessary for the in vitro assembly process of the 50S ribosomal subunit. It is not involved in the protein synthesizing functions of that subunit. This Dechloromonas aromatica (strain RCB) protein is Large ribosomal subunit protein bL20.